We begin with the raw amino-acid sequence, 205 residues long: MVEPREQFFQDLLSAVDQQMDTVKNDIKDIMKEKTSFMVSFENFIERYDTMEKNIQDLQNKYEEMAANLMTVMTDTKIQLGAIIAQLEILMINGTPLPAKKTTIKEAMPLPSSNTNNDQTSPPASGKTSETPKKNPTNAMFFTRSEWASSKTFREKFLTPEIQAILDEQFANKTGIERLHAEGLYMWRTQFSDEQKKMVKEMMKK.

The stretch at 10 to 75 (QDLLSAVDQQ…AANLMTVMTD (66 aa)) forms a coiled coil. The segment at 108-141 (MPLPSSNTNNDQTSPPASGKTSETPKKNPTNAMF) is disordered. The span at 111 to 141 (PSSNTNNDQTSPPASGKTSETPKKNPTNAMF) shows a compositional bias: polar residues.

Belongs to the asfivirus K205R family.

The protein resides in the host cytoplasm. Its function is as follows. Induces host endoplasmic reticulum stress and consequently activates autophagy and NF-kappa-B signaling pathway. In turn, may induce autophagy-mediated STING1 degradation and innate immune evasion. This is an uncharacterized protein from Ornithodoros (relapsing fever ticks).